The primary structure comprises 588 residues: Intracellular maltogenic amylase (588 aa).

Ca(2+) is bound by residues N149, S155, G174, and D176. Residues H249 and R325 each coordinate substrate. The Nucleophile role is filled by D327. E356 functions as the Proton donor in the catalytic mechanism. Residues 422-423 (HD), D467, and R471 contribute to the substrate site.

Belongs to the glycosyl hydrolase 13 family. BbmA subfamily. Monomer or homodimer; in equilibrium. Requires Ca(2+) as cofactor.

It localises to the cytoplasm. Its function is as follows. Hydrolyzes beta-cyclodextrin to maltose and glucose, soluble starch to maltose and glucose, and pullulan to panose with trace amounts of maltose and glucose. It is also able to hydrolyze acarbose. Can also exhibit a transglycosylation activity transferring glucose or maltose to another moiety of sugars by forming alpha-(1,6)- and alpha-(1,3)-glycosidic linkages upon the hydrolysis of substrate at concentrations of 5% or higher. The polypeptide is Intracellular maltogenic amylase (bbmA) (Bacillus subtilis).